Here is a 463-residue protein sequence, read N- to C-terminus: Probable transport protein HsrA (463 aa).

The next 14 membrane-spanning stretches (helical) occupy residues 10 to 30 (GLAW…TILN), 49 to 69 (MAII…AWAA), 82 to 102 (VFTF…ESLI), 107 to 127 (IQGI…IQAV), 139 to 159 (MATA…WLVI), 165 to 185 (WIFL…GSVM), 197 to 217 (WTGF…LDLL), 225 to 245 (SVTY…CGYA), 267 to 287 (IIAN…LPLM), 298 to 318 (MSGW…ILIG), 328 to 348 (TTLI…AWLD), 354 to 374 (TWII…FTSI), 393 to 413 (VLSI…SIIL), and 429 to 449 (AFSY…WSLM).

The protein belongs to the major facilitator superfamily. EmrB family.

The protein localises to the cell inner membrane. The polypeptide is Probable transport protein HsrA (hsrA) (Haemophilus influenzae (strain ATCC 51907 / DSM 11121 / KW20 / Rd)).